A 320-amino-acid polypeptide reads, in one-letter code: MQNRNFNNLIIKWAIRLISIMIIINTIFWSSISEAFPIYAQQGYENPREATGRIVCANCHLAKKPVDIEVPQSVLPNTVFEAVVKIPYDMQIKQVLANGKKGSLNVGAVLILPEGFELAPSDRIPPEMKEKIGNLFFQPYSNDKKNILVIGPVPGKKYSEMVFPILSPDPATNKEAHFLKYPIYVGGNRGRGQIYPDGSKSNNTVYNASITGKVSKIFRKEKGGYEITIDDISDGHKVVDISAAGPELIISEGELVKVDQPLTNNPNVGGFGQGDAEVVLQDPLRIQGLLLFFGSVILAQIFLVLKKKQFEKVQLAEMNF.

The N-terminal stretch at 1 to 35 is a signal peptide; sequence MQNRNFNNLIIKWAIRLISIMIIINTIFWSSISEA. Residues F36, C56, C59, and H60 each contribute to the heme site. A helical transmembrane segment spans residues 286–305; it reads IQGLLLFFGSVILAQIFLVL.

This sequence belongs to the cytochrome f family. The 4 large subunits of the cytochrome b6-f complex are cytochrome b6, subunit IV (17 kDa polypeptide, petD), cytochrome f and the Rieske protein, while the 4 small subunits are PetG, PetL, PetM and PetN. The complex functions as a dimer. Heme is required as a cofactor.

The protein localises to the plastid. Its subcellular location is the chloroplast thylakoid membrane. Component of the cytochrome b6-f complex, which mediates electron transfer between photosystem II (PSII) and photosystem I (PSI), cyclic electron flow around PSI, and state transitions. In Marchantia polymorpha (Common liverwort), this protein is Cytochrome f (petA).